Reading from the N-terminus, the 100-residue chain is MSDNLCGGLPPEICEQLNKEEQFIKIKVEKRRYGKEVTIIEGLSGSDVELKKIASELKSKLAAGGTVKNGKIELQGDHRERVKELLMKMGYPESNIIIIE.

Belongs to the SUI1 family.

The chain is Protein translation factor SUI1 homolog from Sulfurisphaera tokodaii (strain DSM 16993 / JCM 10545 / NBRC 100140 / 7) (Sulfolobus tokodaii).